An 886-amino-acid chain; its full sequence is Semaphorin-6B (886 aa).

The N-terminal stretch at 1-26 (MWTPRVPPPRPALSFFLLLLLGVTYG) is a signal peptide. At 27 to 605 (LFPEEPPPLS…VSVNLLVTSS (579 aa)) the chain is on the extracellular side. Positions 32-525 (PPPLSVAPRD…FPRCVVRVPV (494 aa)) constitute a Sema domain. Asn75 carries N-linked (GlcNAc...) asparagine glycosylation. Cystine bridges form between Cys117/Cys127 and Cys145/Cys154. N-linked (GlcNAc...) asparagine glycosylation is found at Asn156 and Asn292. Cystine bridges form between Cys268-Cys379 and Cys293-Cys338. N-linked (GlcNAc...) asparagine glycosylation is found at Asn387, Asn442, and Asn463. Cystine bridges form between Cys487/Cys519, Cys528/Cys546, Cys534/Cys580, and Cys538/Cys554. The chain crosses the membrane as a helical span at residues 606-626 (VAAFVVGAVVSGFSVGWFVGL). Residues 627-886 (RERRELARRK…TGERTAPPVP (260 aa)) lie on the Cytoplasmic side of the membrane. Disordered stretches follow at residues 655 to 677 (RLGE…PGGP), 697 to 731 (HGGP…AHAL), and 761 to 886 (EQPQ…PPVP). Residues 662-674 (TGPGGRGGAGGGP) are compositionally biased toward gly residues. Arg667 is subject to Omega-N-methylarginine. The span at 707-718 (LLPTPEQTPLPQ) shows a compositional bias: low complexity.

This sequence belongs to the semaphorin family. As to quaternary structure, homodimer. Binds specifically the SH3 domain of the protooncogene C-SRC. In terms of tissue distribution, in adulthood, it is expressed ubiquitously.

Its subcellular location is the cell membrane. Functions as a cell surface repellent for mossy fibers of developing neurons in the hippocampus where it plays a role in axon guidance. May function through the PLXNA4 receptor expressed by mossy cell axons. The chain is Semaphorin-6B (Sema6b) from Mus musculus (Mouse).